Consider the following 205-residue polypeptide: MQEKKEEDLQQALNKVSEVGIDEVGRGAIFGPVFSAVVVLTEKNKFLLKQLGVKDSKKLTPKKRKFLVPKILLLSSDYGIGQSSVREIDNLGIRVATELSMIRALKKLKEKPSELIVDGPLLLRPWRGTQKNIVSGDSKFISIASASIVAKVSRDNLMMKLEKKYSGYLIFKNKGYGTREHLSLIKKNGVTNLHRKSFLKKSNLF.

The RNase H type-2 domain maps to 16–205 (VSEVGIDEVG…KSFLKKSNLF (190 aa)). A divalent metal cation is bound by residues Asp-22, Glu-23, and Asp-118.

This sequence belongs to the RNase HII family. Mn(2+) is required as a cofactor. Requires Mg(2+) as cofactor.

The protein localises to the cytoplasm. The catalysed reaction is Endonucleolytic cleavage to 5'-phosphomonoester.. In terms of biological role, endonuclease that specifically degrades the RNA of RNA-DNA hybrids. This chain is Ribonuclease HII, found in Prochlorococcus marinus (strain MIT 9215).